A 399-amino-acid chain; its full sequence is CCA-adding enzyme (399 aa).

Residues Gly-32 and Arg-35 each coordinate ATP. Positions 32 and 35 each coordinate CTP. Mg(2+) is bound by residues Asp-45 and Asp-47. Residues Arg-116, Asp-159, Arg-162, Arg-165, and Arg-168 each contribute to the ATP site. The CTP site is built by Arg-116, Asp-159, Arg-162, Arg-165, and Arg-168.

It belongs to the tRNA nucleotidyltransferase/poly(A) polymerase family. Bacterial CCA-adding enzyme type 3 subfamily. In terms of assembly, homodimer. Mg(2+) is required as a cofactor.

It catalyses the reaction a tRNA precursor + 2 CTP + ATP = a tRNA with a 3' CCA end + 3 diphosphate. The catalysed reaction is a tRNA with a 3' CCA end + 2 CTP + ATP = a tRNA with a 3' CCACCA end + 3 diphosphate. Catalyzes the addition and repair of the essential 3'-terminal CCA sequence in tRNAs without using a nucleic acid template. Adds these three nucleotides in the order of C, C, and A to the tRNA nucleotide-73, using CTP and ATP as substrates and producing inorganic pyrophosphate. tRNA 3'-terminal CCA addition is required both for tRNA processing and repair. Also involved in tRNA surveillance by mediating tandem CCA addition to generate a CCACCA at the 3' terminus of unstable tRNAs. While stable tRNAs receive only 3'-terminal CCA, unstable tRNAs are marked with CCACCA and rapidly degraded. This chain is CCA-adding enzyme, found in Streptococcus pneumoniae serotype 19F (strain G54).